We begin with the raw amino-acid sequence, 685 residues long: Glycine--tRNA ligase beta subunit (685 aa).

Belongs to the class-II aminoacyl-tRNA synthetase family. Tetramer of two alpha and two beta subunits.

It is found in the cytoplasm. The catalysed reaction is tRNA(Gly) + glycine + ATP = glycyl-tRNA(Gly) + AMP + diphosphate. This chain is Glycine--tRNA ligase beta subunit, found in Leuconostoc mesenteroides subsp. mesenteroides (strain ATCC 8293 / DSM 20343 / BCRC 11652 / CCM 1803 / JCM 6124 / NCDO 523 / NBRC 100496 / NCIMB 8023 / NCTC 12954 / NRRL B-1118 / 37Y).